Here is a 659-residue protein sequence, read N- to C-terminus: Cysteine-rich receptor-like protein kinase 18 (659 aa).

A signal peptide spans 1–27 (MATKSCELVLCFFVFFVISFSAISVSA). 2 Gnk2-homologous domains span residues 28-131 (QTCD…NRPF) and 137-250 (MDPL…VYPF). Residues 28–287 (QTCDNTTGTF…KNDSRISGGK (260 aa)) lie on the Extracellular side of the membrane. N32, N57, N152, N162, N179, N180, N197, N275, and N279 each carry an N-linked (GlcNAc...) asparagine glycan. The helical transmembrane segment at 288 to 308 (IAAIVVVTVVTIILVVLGFVI) threads the bilayer. Over 309–659 (SNRRKQKQEM…EATITDVNPR (351 aa)) the chain is Cytoplasmic. The region spanning 339 to 611 (FSERNKLGKG…PTMSTIHQML (273 aa)) is the Protein kinase domain. ATP contacts are provided by residues 345–353 (LGKGGFGEV) and K367. Position 412 is a phosphotyrosine (Y412). D464 functions as the Proton acceptor in the catalytic mechanism. S468 carries the phosphoserine modification. T504 bears the Phosphothreonine mark. Y512 carries the phosphotyrosine modification.

The protein belongs to the protein kinase superfamily. Ser/Thr protein kinase family. CRK subfamily.

The protein localises to the membrane. It catalyses the reaction L-seryl-[protein] + ATP = O-phospho-L-seryl-[protein] + ADP + H(+). It carries out the reaction L-threonyl-[protein] + ATP = O-phospho-L-threonyl-[protein] + ADP + H(+). This Arabidopsis thaliana (Mouse-ear cress) protein is Cysteine-rich receptor-like protein kinase 18 (CRK18).